The chain runs to 425 residues: Glutamate-1-semialdehyde 2,1-aminomutase (425 aa).

Lys-265 is modified (N6-(pyridoxal phosphate)lysine).

Belongs to the class-III pyridoxal-phosphate-dependent aminotransferase family. HemL subfamily. As to quaternary structure, homodimer. Pyridoxal 5'-phosphate serves as cofactor.

Its subcellular location is the cytoplasm. It carries out the reaction (S)-4-amino-5-oxopentanoate = 5-aminolevulinate. It participates in porphyrin-containing compound metabolism; protoporphyrin-IX biosynthesis; 5-aminolevulinate from L-glutamyl-tRNA(Glu): step 2/2. This chain is Glutamate-1-semialdehyde 2,1-aminomutase, found in Laribacter hongkongensis (strain HLHK9).